Here is a 301-residue protein sequence, read N- to C-terminus: 3-methyl-2-oxobutanoate hydroxymethyltransferase (301 aa).

Over residues M1–P12 the composition is skewed to polar residues. The tract at residues M1–A24 is disordered. Mg(2+)-binding residues include D82 and D121. Residues D82–S83, D121, and K151 contribute to the 3-methyl-2-oxobutanoate site. A Mg(2+)-binding site is contributed by E153. Catalysis depends on E219, which acts as the Proton acceptor.

It belongs to the PanB family. As to quaternary structure, homodecamer; pentamer of dimers. Requires Mg(2+) as cofactor.

It localises to the cytoplasm. The catalysed reaction is 3-methyl-2-oxobutanoate + (6R)-5,10-methylene-5,6,7,8-tetrahydrofolate + H2O = 2-dehydropantoate + (6S)-5,6,7,8-tetrahydrofolate. Its pathway is cofactor biosynthesis; (R)-pantothenate biosynthesis; (R)-pantoate from 3-methyl-2-oxobutanoate: step 1/2. Functionally, catalyzes the reversible reaction in which hydroxymethyl group from 5,10-methylenetetrahydrofolate is transferred onto alpha-ketoisovalerate to form ketopantoate. The polypeptide is 3-methyl-2-oxobutanoate hydroxymethyltransferase (Paenarthrobacter aurescens (strain TC1)).